Consider the following 430-residue polypeptide: Trigger factor (430 aa).

Residues 163 to 248 (GNIAIIDFKG…IKDIKVKELP (86 aa)) form the PPIase FKBP-type domain.

This sequence belongs to the FKBP-type PPIase family. Tig subfamily.

Its subcellular location is the cytoplasm. It catalyses the reaction [protein]-peptidylproline (omega=180) = [protein]-peptidylproline (omega=0). Functionally, involved in protein export. Acts as a chaperone by maintaining the newly synthesized protein in an open conformation. Functions as a peptidyl-prolyl cis-trans isomerase. This chain is Trigger factor, found in Clostridium botulinum (strain Okra / Type B1).